A 191-amino-acid chain; its full sequence is MTQQITLIKDKILSDNYFTLHNITYDLTRKDGEVIRHKREVYDRGNGATILLYNAKKKSVVLIRQFRVATWVNGNESGQLIETCAGLLDNDEPEVCIRKEAIEETGYEVGEVRKLFELYMSPGGVTELIHFFIAEYSDNQRANAGGGVEDEDIEVLELPFSQALEMIKTGEIRDGKTVLLLNYLQMSHLMD.

Residues Y17, 38-40 (KRE), R67, and 85-87 (AGL) contribute to the GDP-alpha-D-mannose site. A Nudix hydrolase domain is found at 43–180 (DRGNGATILL…EIRDGKTVLL (138 aa)). Mg(2+) contacts are provided by A85, E100, and E104. The Nudix box signature appears at 86–106 (GLLDNDEPEVCIRKEAIEETG). Residues E104, E127, 150–151 (DE), and K176 each bind GDP-alpha-D-mannose. E151 is a binding site for Mg(2+).

It belongs to the Nudix hydrolase family. NudK subfamily. Homodimer. Mg(2+) is required as a cofactor.

The catalysed reaction is GDP-alpha-D-mannose + H2O = alpha-D-mannose 1-phosphate + GMP + 2 H(+). In terms of biological role, nucleoside diphosphate sugar hydrolase that hydrolyzes GDP-mannose as its preferred substrate, yielding GMP and mannose-1-phosphate. This chain is GDP-mannose pyrophosphatase (nudK), found in Shigella flexneri serotype 5b (strain 8401).